The sequence spans 370 residues: Queuine tRNA-ribosyltransferase (370 aa).

Aspartate 89 (proton acceptor) is an active-site residue. Substrate is bound by residues aspartate 89–phenylalanine 93, aspartate 143, glutamine 187, and glycine 214. The segment at glycine 245 to aspartate 251 is RNA binding. The Nucleophile role is filled by aspartate 264. The RNA binding; important for wobble base 34 recognition stretch occupies residues threonine 269 to arginine 273. Zn(2+) is bound by residues cysteine 302, cysteine 304, cysteine 307, and histidine 333.

It belongs to the queuine tRNA-ribosyltransferase family. In terms of assembly, homodimer. Within each dimer, one monomer is responsible for RNA recognition and catalysis, while the other monomer binds to the replacement base PreQ1. Zn(2+) serves as cofactor.

The catalysed reaction is 7-aminomethyl-7-carbaguanine + guanosine(34) in tRNA = 7-aminomethyl-7-carbaguanosine(34) in tRNA + guanine. Its pathway is tRNA modification; tRNA-queuosine biosynthesis. Its function is as follows. Catalyzes the base-exchange of a guanine (G) residue with the queuine precursor 7-aminomethyl-7-deazaguanine (PreQ1) at position 34 (anticodon wobble position) in tRNAs with GU(N) anticodons (tRNA-Asp, -Asn, -His and -Tyr). Catalysis occurs through a double-displacement mechanism. The nucleophile active site attacks the C1' of nucleotide 34 to detach the guanine base from the RNA, forming a covalent enzyme-RNA intermediate. The proton acceptor active site deprotonates the incoming PreQ1, allowing a nucleophilic attack on the C1' of the ribose to form the product. After dissociation, two additional enzymatic reactions on the tRNA convert PreQ1 to queuine (Q), resulting in the hypermodified nucleoside queuosine (7-(((4,5-cis-dihydroxy-2-cyclopenten-1-yl)amino)methyl)-7-deazaguanosine). The sequence is that of Queuine tRNA-ribosyltransferase from Baumannia cicadellinicola subsp. Homalodisca coagulata.